A 534-amino-acid chain; its full sequence is Inosine-5'-monophosphate dehydrogenase (534 aa).

CBS domains are found at residues 117-181 (YVMQ…GTPI) and 190-255 (TTPI…PMAS). NAD(+) contacts are provided by residues 292 to 294 (DSS) and 342 to 344 (GMG). Positions 344 and 346 each coordinate K(+). S347 is a binding site for IMP. C349 is a K(+) binding site. Catalysis depends on C349, which acts as the Thioimidate intermediate. Residues 382–384 (DGG), 405–406 (GG), and 430–434 (YRGMG) each bind IMP. The active-site Proton acceptor is R448. Q461 lines the IMP pocket. 3 residues coordinate K(+): E520, G521, and G522.

It belongs to the IMPDH/GMPR family. As to quaternary structure, homotetramer. The cofactor is K(+).

The protein resides in the cytoplasm. The enzyme catalyses IMP + NAD(+) + H2O = XMP + NADH + H(+). It functions in the pathway purine metabolism; XMP biosynthesis via de novo pathway; XMP from IMP: step 1/1. Mycophenolic acid (MPA) is a non-competitive inhibitor that prevents formation of the closed enzyme conformation by binding to the same site as the amobile flap. In contrast, mizoribine monophosphate (MZP) is a competitive inhibitor that induces the closed conformation. MPA is a potent inhibitor of mammalian IMPDHs but a poor inhibitor of the bacterial enzymes. MZP is a more potent inhibitor of bacterial IMPDH. Its function is as follows. Catalyzes the conversion of inosine 5'-phosphate (IMP) to xanthosine 5'-phosphate (XMP), the first committed and rate-limiting step in the de novo synthesis of guanine nucleotides, and therefore plays an important role in the regulation of cell growth. This is Inosine-5'-monophosphate dehydrogenase from Caenorhabditis elegans.